A 567-amino-acid polypeptide reads, in one-letter code: Urease subunit alpha (567 aa).

Residues 129–567 (GGIDVHVHFI…VPMSQRYFLF (439 aa)) enclose the Urease domain. Ni(2+)-binding residues include His-134, His-136, and Lys-217. Lys-217 is subject to N6-carboxylysine. His-219 lines the substrate pocket. Ni(2+) contacts are provided by His-246 and His-272. The active-site Proton donor is His-320. Asp-360 provides a ligand contact to Ni(2+).

The protein belongs to the metallo-dependent hydrolases superfamily. Urease alpha subunit family. In terms of assembly, heterotrimer of UreA (gamma), UreB (beta) and UreC (alpha) subunits. Three heterotrimers associate to form the active enzyme. Ni cation serves as cofactor. In terms of processing, carboxylation allows a single lysine to coordinate two nickel ions.

The protein localises to the cytoplasm. The enzyme catalyses urea + 2 H2O + H(+) = hydrogencarbonate + 2 NH4(+). The protein operates within nitrogen metabolism; urea degradation; CO(2) and NH(3) from urea (urease route): step 1/1. This Blochmanniella floridana protein is Urease subunit alpha.